The following is a 355-amino-acid chain: Erythronate-4-phosphate dehydrogenase (355 aa).

Substrate is bound by residues serine 45 and threonine 66. Aspartate 146 provides a ligand contact to NAD(+). Arginine 206 is a catalytic residue. Aspartate 229 is a binding site for NAD(+). Glutamate 234 is an active-site residue. Catalysis depends on histidine 251, which acts as the Proton donor. Glycine 254 contacts NAD(+). Tyrosine 255 is a binding site for substrate.

The protein belongs to the D-isomer specific 2-hydroxyacid dehydrogenase family. PdxB subfamily. In terms of assembly, homodimer.

The protein localises to the cytoplasm. The catalysed reaction is 4-phospho-D-erythronate + NAD(+) = (R)-3-hydroxy-2-oxo-4-phosphooxybutanoate + NADH + H(+). It participates in cofactor biosynthesis; pyridoxine 5'-phosphate biosynthesis; pyridoxine 5'-phosphate from D-erythrose 4-phosphate: step 2/5. Functionally, catalyzes the oxidation of erythronate-4-phosphate to 3-hydroxy-2-oxo-4-phosphonooxybutanoate. This Acinetobacter baumannii (strain ACICU) protein is Erythronate-4-phosphate dehydrogenase.